Here is a 336-residue protein sequence, read N- to C-terminus: Polyprenyl transferase dpasC (336 aa).

The chain crosses the membrane as a helical span at residues 34-54; the sequence is LFTIFAGGMFLFVASFPTTAF. Asparagine 66 carries N-linked (GlcNAc...) asparagine glycosylation. 7 helical membrane-spanning segments follow: residues 80-100, 125-145, 181-201, 205-225, 253-273, 274-294, and 311-331; these read ALCL…NDWI, QAML…HFML, YILG…IFHG, FAES…WTIF, HVHL…PMYL, NQFH…LSLL, and LHVD…IELL.

It belongs to the UbiA prenyltransferase family. Mg(2+) serves as cofactor.

It is found in the membrane. It participates in secondary metabolite biosynthesis; terpenoid biosynthesis. Its function is as follows. Polyprenyl transferase; part of the gene cluster that mediates the biosynthesis of the diterpenoid pyrones subglutinols A and B. The first step of the pathway is the synthesis of the alpha-pyrone moiety by the polyketide synthase dpasA via condensation of one acetyl-CoA starter unit with 3 malonyl-CoA units and 2 methylations. The alpha-pyrone is then combined with geranylgeranyl pyrophosphate (GGPP) formed by the GGPP synthase dpasD through the action of the prenyltransferase dpasC to yield a linear alpha-pyrone diterpenoid. Subsequent steps in the diterpenoid pyrone biosynthetic pathway involve the decalin core formation, which is initiated by the epoxidation of the C10-C11 olefin by the FAD-dependent oxidoreductase dpasE, and is followed by a cyclization cascade catalyzed by the terpene cyclase dpasB. The FAD-linked oxidoreductase dpasF is then involved in tetrahydrofuran (THF) ring formation at the C5 unit to complete the formation of subglutinols A and B. DpasF possesses also an additional catalytic ability of multi-step oxidations to generate a new DDP analog with an enone system at the C5 named FDDP A. The sequence is that of Polyprenyl transferase dpasC from Apiospora sacchari (Arthrinium sacchari).